The primary structure comprises 366 residues: Anthranilate phosphoribosyltransferase (366 aa).

Residues glycine 103, 106 to 107 (GD), threonine 111, 113 to 116 (NLST), 131 to 139 (KHGNRASSS), and glycine 143 contribute to the 5-phospho-alpha-D-ribose 1-diphosphate site. Position 103 (glycine 103) interacts with anthranilate. Position 115 (serine 115) interacts with Mg(2+). Asparagine 134 contacts anthranilate. Anthranilate is bound at residue arginine 189. 2 residues coordinate Mg(2+): aspartate 247 and glutamate 248.

This sequence belongs to the anthranilate phosphoribosyltransferase family. In terms of assembly, homodimer. It depends on Mg(2+) as a cofactor.

The catalysed reaction is N-(5-phospho-beta-D-ribosyl)anthranilate + diphosphate = 5-phospho-alpha-D-ribose 1-diphosphate + anthranilate. Its pathway is amino-acid biosynthesis; L-tryptophan biosynthesis; L-tryptophan from chorismate: step 2/5. Functionally, catalyzes the transfer of the phosphoribosyl group of 5-phosphorylribose-1-pyrophosphate (PRPP) to anthranilate to yield N-(5'-phosphoribosyl)-anthranilate (PRA). This Mycobacterium leprae (strain Br4923) protein is Anthranilate phosphoribosyltransferase.